Here is a 353-residue protein sequence, read N- to C-terminus: Uroporphyrinogen decarboxylase (353 aa).

Substrate contacts are provided by residues 30 to 34, Asp-79, Tyr-154, Ser-209, and His-332; that span reads RQAGR.

The protein belongs to the uroporphyrinogen decarboxylase family. In terms of assembly, homodimer.

The protein resides in the cytoplasm. It carries out the reaction uroporphyrinogen III + 4 H(+) = coproporphyrinogen III + 4 CO2. Its pathway is porphyrin-containing compound metabolism; protoporphyrin-IX biosynthesis; coproporphyrinogen-III from 5-aminolevulinate: step 4/4. Functionally, catalyzes the decarboxylation of four acetate groups of uroporphyrinogen-III to yield coproporphyrinogen-III. The chain is Uroporphyrinogen decarboxylase from Mycolicibacterium smegmatis (strain ATCC 700084 / mc(2)155) (Mycobacterium smegmatis).